The primary structure comprises 361 residues: Phosphoserine aminotransferase (361 aa).

Position 43 (Arg-43) interacts with L-glutamate. 4 residues coordinate pyridoxal 5'-phosphate: Trp-103, Thr-153, Asp-173, and Gln-196. Lys-197 is subject to N6-(pyridoxal phosphate)lysine. 238 to 239 provides a ligand contact to pyridoxal 5'-phosphate; that stretch reads NT.

It belongs to the class-V pyridoxal-phosphate-dependent aminotransferase family. SerC subfamily. As to quaternary structure, homodimer. It depends on pyridoxal 5'-phosphate as a cofactor.

It is found in the cytoplasm. It catalyses the reaction O-phospho-L-serine + 2-oxoglutarate = 3-phosphooxypyruvate + L-glutamate. The catalysed reaction is 4-(phosphooxy)-L-threonine + 2-oxoglutarate = (R)-3-hydroxy-2-oxo-4-phosphooxybutanoate + L-glutamate. The protein operates within amino-acid biosynthesis; L-serine biosynthesis; L-serine from 3-phospho-D-glycerate: step 2/3. It functions in the pathway cofactor biosynthesis; pyridoxine 5'-phosphate biosynthesis; pyridoxine 5'-phosphate from D-erythrose 4-phosphate: step 3/5. Its function is as follows. Catalyzes the reversible conversion of 3-phosphohydroxypyruvate to phosphoserine and of 3-hydroxy-2-oxo-4-phosphonooxybutanoate to phosphohydroxythreonine. The chain is Phosphoserine aminotransferase from Hahella chejuensis (strain KCTC 2396).